The sequence spans 563 residues: Cytochrome P450 monooxygenase efuG (563 aa).

The chain crosses the membrane as a helical span at residues 10-30 (ITSHQWGIGSVFLLISIPLIV). The disordered stretch occupies residues 462–482 (PDDPQSGPRKDAKKQKAKSDG). Position 505 (cysteine 505) interacts with heme.

This sequence belongs to the cytochrome P450 family. The cofactor is heme.

It localises to the membrane. Its pathway is secondary metabolite biosynthesis; terpenoid biosynthesis. Cytochrome P450 monooxygenase; part of the gene cluster that mediates the biosynthesis of enfumafungin, a glycosylated fernene-type triterpenoid with potent antifungal activity, mediated by its interaction with beta-1,3-glucan synthase and the fungal cell wall. The pathway begins with the terpene cyclase-glycosyl transferase fusion protein that most likely uses 2,3-oxidosqualene as substrate and catalyzes glycosylation immediately after cyclization. The fernene glycoside then could be processed by the desaturase efuI which catalyzes isomerization of a double bond established by efuA to form the core structure. The latter would then undergo a series of hydroxylations in unknown order at C-2, C-19, C-23 and C-25, which would be catalyzed by two of the three cytochrome P450 monooxygenases efuB, efuG or efuH. The hydroxy-group at C-25 becomes oxidized by the dehydrogenase efuE to enable a spontaneous, non-enzymatic hemiacetal formation with C-23. After hydroxylation at C-2, acetylation by the acetyltransferase efuC takes place. The final steps in enfumafungin biosynthesis require expansion of the 5-membered ring by lactonization via a Baeyer-Villiger reaction mediated by one of the BGC's cytochrome P450 monooxygenases (efuB, efuG or efuH) followed by ring cleavage. This type of reaction would establish a double bond between C-20 and C-21 which could be reduced by the reductase efuL to form the final product. In Hormonema carpetanum, this protein is Cytochrome P450 monooxygenase efuG.